We begin with the raw amino-acid sequence, 264 residues long: Glutamate racemase (264 aa).

Substrate contacts are provided by residues 10-11 and 42-43; these read DS and YG. Cys73 acts as the Proton donor/acceptor in catalysis. 74 to 75 contributes to the substrate binding site; it reads NT. The Proton donor/acceptor role is filled by Cys183. 184–185 is a substrate binding site; the sequence is TH.

It belongs to the aspartate/glutamate racemases family.

It carries out the reaction L-glutamate = D-glutamate. It participates in cell wall biogenesis; peptidoglycan biosynthesis. Functionally, provides the (R)-glutamate required for cell wall biosynthesis. This chain is Glutamate racemase, found in Streptococcus pneumoniae (strain ATCC BAA-255 / R6).